A 173-amino-acid chain; its full sequence is MNFKNTFFWFTALLSLLLDHLTKLWVVKNFALTVPPQTIPLWPGVFHLTYVTNTGAAFSLFSQGGEWLRWLSLGVSVGLMALAILGPNFNRWEQAGYGFLLGGAAGNGIDRFVAGRVVDFLDFRLIGFPIFNLADVFINIGIICLLIAAWGPLPSRRRAERRPSSPPPSDKLP.

A run of 4 helical transmembrane segments spans residues 7–27 (FFWF…LWVV), 41–61 (LWPG…FSLF), 70–90 (WLSL…PNFN), and 95–115 (AGYG…FVAG). Active-site residues include Asp119 and Asp135. Residues 130–150 (IFNLADVFINIGIICLLIAAW) form a helical membrane-spanning segment.

It belongs to the peptidase A8 family.

It localises to the cell inner membrane. The enzyme catalyses Release of signal peptides from bacterial membrane prolipoproteins. Hydrolyzes -Xaa-Yaa-Zaa-|-(S,diacylglyceryl)Cys-, in which Xaa is hydrophobic (preferably Leu), and Yaa (Ala or Ser) and Zaa (Gly or Ala) have small, neutral side chains.. Its pathway is protein modification; lipoprotein biosynthesis (signal peptide cleavage). Its function is as follows. This protein specifically catalyzes the removal of signal peptides from prolipoproteins. The chain is Lipoprotein signal peptidase from Cyanothece sp. (strain PCC 7425 / ATCC 29141).